Reading from the N-terminus, the 489-residue chain is Type II restriction enzyme Sau3AI (489 aa).

Mg(2+) is required as a cofactor.

It carries out the reaction Endonucleolytic cleavage of DNA to give specific double-stranded fragments with terminal 5'-phosphates.. Its function is as follows. An E and P subtype restriction enzyme that recognizes the double-stranded sequence 5'-GATC-3' and cleaves before G-1. This chain is Type II restriction enzyme Sau3AI (sau3AIR), found in Staphylococcus aureus.